The primary structure comprises 274 residues: Outer surface protein A (274 aa).

Positions 1–16 (MKKYLLGIGLILALIA) are cleaved as a signal peptide. A lipid anchor (N-palmitoyl cysteine) is attached at cysteine 17. The S-diacylglycerol cysteine moiety is linked to residue cysteine 17.

This sequence belongs to the OspA lipoprotein family.

It is found in the cell outer membrane. The protein localises to the cell surface. This chain is Outer surface protein A, found in Borreliella burgdorferi (Lyme disease spirochete).